A 279-amino-acid chain; its full sequence is Bifunctional protein FolD (279 aa).

NADP(+) contacts are provided by residues 164-166 (GRS), Ser-189, and Ile-230.

Belongs to the tetrahydrofolate dehydrogenase/cyclohydrolase family. Homodimer.

The catalysed reaction is (6R)-5,10-methylene-5,6,7,8-tetrahydrofolate + NADP(+) = (6R)-5,10-methenyltetrahydrofolate + NADPH. It catalyses the reaction (6R)-5,10-methenyltetrahydrofolate + H2O = (6R)-10-formyltetrahydrofolate + H(+). It participates in one-carbon metabolism; tetrahydrofolate interconversion. Its function is as follows. Catalyzes the oxidation of 5,10-methylenetetrahydrofolate to 5,10-methenyltetrahydrofolate and then the hydrolysis of 5,10-methenyltetrahydrofolate to 10-formyltetrahydrofolate. This is Bifunctional protein FolD from Agathobacter rectalis (strain ATCC 33656 / DSM 3377 / JCM 17463 / KCTC 5835 / VPI 0990) (Eubacterium rectale).